We begin with the raw amino-acid sequence, 428 residues long: Enolase (428 aa).

Glutamine 163 is a binding site for (2R)-2-phosphoglycerate. Catalysis depends on glutamate 205, which acts as the Proton donor. 3 residues coordinate Mg(2+): aspartate 242, glutamate 285, and aspartate 312. The (2R)-2-phosphoglycerate site is built by lysine 337, arginine 366, serine 367, and lysine 388. The Proton acceptor role is filled by lysine 337.

The protein belongs to the enolase family. Mg(2+) is required as a cofactor.

The protein localises to the cytoplasm. The protein resides in the secreted. Its subcellular location is the cell surface. It catalyses the reaction (2R)-2-phosphoglycerate = phosphoenolpyruvate + H2O. Its pathway is carbohydrate degradation; glycolysis; pyruvate from D-glyceraldehyde 3-phosphate: step 4/5. Its function is as follows. Catalyzes the reversible conversion of 2-phosphoglycerate (2-PG) into phosphoenolpyruvate (PEP). It is essential for the degradation of carbohydrates via glycolysis. In Rhodopirellula baltica (strain DSM 10527 / NCIMB 13988 / SH1), this protein is Enolase.